Consider the following 476-residue polypeptide: Small ribosomal subunit protein mS29 (476 aa).

Residues 1–54 constitute a mitochondrion transit peptide; sequence MLPKFRSRSSIIKNTERISNILSGGKLTVCGSKLGGLYTFEKCTFNKYYSSSQY. Positions 58–97 are disordered; it reads GRPVGGNIHSSSNQQRQKNSEAPRINEIPPSTSSVEKSTT. Composition is skewed to polar residues over residues 65-74 and 86-97; these read IHSSSNQQRQ and PPSTSSVEKSTT. 200 to 207 contacts ATP; the sequence is GAPGSGRS.

This sequence belongs to the mitochondrion-specific ribosomal protein mS29 family. As to quaternary structure, component of the mitochondrial small ribosomal subunit (mt-SSU). Mature yeast 74S mitochondrial ribosomes consist of a small (37S) and a large (54S) subunit. The 37S small subunit contains a 15S ribosomal RNA (15S mt-rRNA) and at least 32 different proteins. The 54S large subunit contains a 21S rRNA (21S mt-rRNA) and at least 45 different proteins.

The protein localises to the mitochondrion. Functionally, component of the mitochondrial ribosome (mitoribosome), a dedicated translation machinery responsible for the synthesis of mitochondrial genome-encoded proteins, including at least some of the essential transmembrane subunits of the mitochondrial respiratory chain. The mitoribosomes are attached to the mitochondrial inner membrane and translation products are cotranslationally integrated into the membrane. mS29 binds GTP and is probably an active GTPase. GTP hydrolysis may be linked to subunit association. mS29 also has an extraribosomal function, being required for maintenance of mitochondrial DNA. The sequence is that of Small ribosomal subunit protein mS29 (rsm23) from Schizosaccharomyces pombe (strain 972 / ATCC 24843) (Fission yeast).